The sequence spans 605 residues: Leucine-rich repeat-containing protein 40 (605 aa).

Positions 1-26 (MSRFRRGGKAPDPLSGFRAPKEQEPA) are disordered. LRR repeat units follow at residues 83-104 (DLTK…ISLL), 106-127 (ALVV…IKEL), 129-151 (NLQK…QHLQ), 152-173 (NLKS…IGHL), 175-196 (ILEE…VGQL), 198-219 (GLVK…IGKM), 221-242 (NLKQ…VAGM), 244-265 (SLEQ…PFLT), 266-287 (KLKE…HLQN), 290-311 (SLSV…ISLL), 313-335 (GLER…GSLP), 336-357 (NLKS…ILNK), 429-450 (FITT…IVEM), 453-475 (SVCD…CMLL), 476-497 (KLTH…MEAM), 499-520 (RLQS…LYRI), 522-543 (TLET…QLIK), 546-567 (KLST…LGNC), and 569-590 (SLRA…ILAK).

The sequence is that of Leucine-rich repeat-containing protein 40 (lrrc40) from Xenopus tropicalis (Western clawed frog).